Here is a 387-residue protein sequence, read N- to C-terminus: uncharacterized protein (387 aa).

This sequence belongs to the geranylgeranyl reductase family. ChlP subfamily.

This is an uncharacterized protein from Methanosarcina barkeri (strain Fusaro / DSM 804).